The primary structure comprises 907 residues: Lipoxygenase 1, chloroplastic (907 aa).

Residues 1 to 49 constitute a chloroplast transit peptide; the sequence is MALAKQIMGASLMDQKTSVFGSNLCLNHVLVNKHRLRLRKTRKNGSMVV. One can recognise a PLAT domain in the interval 85 to 209; the sequence is DFFKDTIFRK…DLPNPRIFFT (125 aa). Positions 212-907 constitute a Lipoxygenase domain; the sequence is PYLPDETPVG…CRGVPNSISI (696 aa). Residues histidine 567, histidine 572, histidine 758, asparagine 762, and isoleucine 907 each contribute to the Fe cation site.

This sequence belongs to the lipoxygenase family. The cofactor is Fe cation. Confined to glandular trichomes in flowers, and, at low levels, in leaves.

It is found in the plastid. It localises to the chloroplast. The enzyme catalyses (9Z,12Z,15Z)-octadecatrienoate + O2 = 13-hydroperoxy-(9Z,11E,15Z)-octadecatrienoate. It participates in lipid metabolism; oxylipin biosynthesis. Its pathway is isoprenoid biosynthesis. Its function is as follows. Component of the monoterpenoid pyrethrins biosynthesis; pyrethrins are widely used plant-derived pesticide. Plant lipoxygenases may be involved in a number of diverse aspects of plant physiology including growth and development, pest resistance, and senescence or responses to wounding. Catalyzes the hydroperoxidation of lipids containing a cis,cis-1,4-pentadiene structure. Mediates the peroxidation of linolenic acid leading to the production of 13-hydroperoxylinolenic acid. The polypeptide is Lipoxygenase 1, chloroplastic (Tanacetum cinerariifolium (Dalmatian daisy)).